Here is a 330-residue protein sequence, read N- to C-terminus: Exostosin-like 2 (330 aa).

Topologically, residues 1 to 21 (MMRGCHICKLPGRVMGIRVLR) are cytoplasmic. The chain crosses the membrane as a helical; Signal-anchor for type II membrane protein span at residues 22 to 42 (FSLVVILVLLLVAGALTNLLP). Over 43–330 (NIKEDKMLTL…FPYANHKSKM (288 aa)) the chain is Lumenal. UDP-N-acetyl-alpha-D-galactosamine is bound at residue Q72. Q72 provides a ligand contact to UDP-N-acetyl-alpha-D-glucosamine. N75 carries N-linked (GlcNAc...) asparagine glycosylation. R76, N101, N130, R135, D151, D152, D153, and D245 together coordinate UDP-N-acetyl-alpha-D-galactosamine. Residues R76, N101, N130, R135, D151, D152, D153, D245, D246, and R293 each coordinate UDP-N-acetyl-alpha-D-glucosamine. Residue D153 coordinates Mn(2+). C244 and C296 are joined by a disulfide. D246 is an active-site residue. Position 293 (R293) interacts with UDP-N-acetyl-alpha-D-galactosamine.

This sequence belongs to the glycosyltransferase 47 family. Mn(2+) serves as cofactor.

It localises to the endoplasmic reticulum membrane. It catalyses the reaction 3-O-(beta-D-GlcA-(1-&gt;3)-beta-D-Gal-(1-&gt;3)-beta-D-Gal-(1-&gt;4)-beta-D-Xyl)-L-seryl-[protein] + UDP-N-acetyl-alpha-D-glucosamine = 3-O-(alpha-D-GlcNAc-(1-&gt;4)-beta-D-GlcA-(1-&gt;3)-beta-D-Gal-(1-&gt;3)-beta-D-Gal-(1-&gt;4)-beta-D-Xyl)-L-seryl-[protein] + UDP + H(+). Glycosyltransferase required for the biosynthesis of heparan-sulfate and responsible for the alternating addition of beta-1-4-linked glucuronic acid (GlcA) and alpha-1-4-linked N-acetylglucosamine (GlcNAc) units to nascent heparan sulfate chains. The polypeptide is Exostosin-like 2 (Extl2) (Mus musculus (Mouse)).